The chain runs to 1200 residues: PAN2-PAN3 deadenylation complex catalytic subunit Pan2 (1200 aa).

WD repeat units lie at residues 153–193 (DENE…QKYA), 195–231 (ETPG…VEHE), 244–280 (VHGN…AITP), and 328–367 (PVGP…SFNP). Positions 368-484 (YSRETEFALP…PTGREEEPLH (117 aa)) are linker. Positions 485–923 (TVSKKYRKVT…VPAILYYVKR (439 aa)) constitute a USP domain. The residue at position 784 (S784) is a Phosphoserine. Residues 974-1146 (VGLDAEFVTL…EDARTALQLY (173 aa)) form the Exonuclease domain. A divalent metal cation is bound by residues D977, E979, D1086, and D1138. S1188 bears the Phosphoserine mark.

The protein belongs to the peptidase C19 family. PAN2 subfamily. Forms a heterotrimer with an asymmetric homodimer of the regulatory subunit PAN3 to form the poly(A)-nuclease (PAN) deadenylation complex. Interacts with PAN3 isoform 1/Pan3L and isoform 3/Pan3S. Interacts with ZFP36. A divalent metal cation is required as a cofactor.

It is found in the cytoplasm. Its subcellular location is the P-body. The protein resides in the nucleus. It catalyses the reaction Exonucleolytic cleavage of poly(A) to 5'-AMP.. Its activity is regulated as follows. Positively regulated by the regulatory subunit PAN3. Functionally, catalytic subunit of the poly(A)-nuclease (PAN) deadenylation complex, one of two cytoplasmic mRNA deadenylases involved in general and miRNA-mediated mRNA turnover. PAN specifically shortens poly(A) tails of RNA and the activity is stimulated by poly(A)-binding protein (PABP). PAN deadenylation is followed by rapid degradation of the shortened mRNA tails by the CCR4-NOT complex. Deadenylated mRNAs are then degraded by two alternative mechanisms, namely exosome-mediated 3'-5' exonucleolytic degradation, or deadenylation-dependent mRNA decaping and subsequent 5'-3' exonucleolytic degradation by XRN1. Also acts as an important regulator of the HIF1A-mediated hypoxic response. Required for HIF1A mRNA stability independent of poly(A) tail length regulation. In Mus musculus (Mouse), this protein is PAN2-PAN3 deadenylation complex catalytic subunit Pan2.